A 485-amino-acid chain; its full sequence is E3 ubiquitin-protein ligase rnf8 (485 aa).

Positions 43–97 (VSVGRGLNVTHQILSSSCPLMISRIHCVFKLNEGRQWTVTDNKSLNGVWVNGKRI) constitute an FHA domain. Residues 150–232 (AASLSQKLKN…SSTCSDSSQH (83 aa)) form a disordered region. Over residues 199–219 (GERRETLKLSSRPLEEDRDKA) the composition is skewed to basic and acidic residues. Low complexity predominate over residues 221–230 (SSSSTCSDSS). An RING-type zinc finger spans residues 392–430 (CSICSELFIEAVTLNCAHSFCQHCISEWRNRKDKCPMCW).

This sequence belongs to the RNF8 family. As to quaternary structure, homodimer. Forms a E2-E3 ubiquitin ligase complex composed of the rnf8 homodimer and a E2 heterodimer of ube2n and ube2v2.

It is found in the nucleus. The catalysed reaction is S-ubiquitinyl-[E2 ubiquitin-conjugating enzyme]-L-cysteine + [acceptor protein]-L-lysine = [E2 ubiquitin-conjugating enzyme]-L-cysteine + N(6)-ubiquitinyl-[acceptor protein]-L-lysine.. Its pathway is protein modification; protein ubiquitination. Functionally, E3 ubiquitin-protein ligase that plays a key role in DNA damage signaling via 2 distinct roles: by mediating the 'Lys-63'-linked ubiquitination of histones H2A and H2AX and promoting the recruitment of DNA repair proteins at double-strand breaks (DSBs) sites, and by catalyzing 'Lys-48'-linked ubiquitination to remove target proteins from DNA damage sites. Following DNA DSBs, it is recruited to the sites of damage by ATM-phosphorylated mdc1 and catalyzes the 'Lys-63'-linked ubiquitination of histones H2A and H2AX. H2A ubiquitination also mediates the ATM-dependent transcriptional silencing at regions flanking DSBs in cis, a mechanism to avoid collision between transcription and repair intermediates. Also catalyzes the formation of 'Lys-48'-linked polyubiquitin chains, leading to degradation of substrate proteins. In addition to its function in damage signaling, also plays a role in higher-order chromatin structure by mediating extensive chromatin decondensation. The protein is E3 ubiquitin-protein ligase rnf8 of Danio rerio (Zebrafish).